The primary structure comprises 132 residues: Phosphoribosyl-AMP cyclohydrolase (132 aa).

Asp79 is a Mg(2+) binding site. Residue Cys80 coordinates Zn(2+). The Mg(2+) site is built by Asp81 and Asp83. Cys100 and Cys107 together coordinate Zn(2+).

This sequence belongs to the PRA-CH family. Homodimer. It depends on Mg(2+) as a cofactor. Requires Zn(2+) as cofactor.

It is found in the cytoplasm. The enzyme catalyses 1-(5-phospho-beta-D-ribosyl)-5'-AMP + H2O = 1-(5-phospho-beta-D-ribosyl)-5-[(5-phospho-beta-D-ribosylamino)methylideneamino]imidazole-4-carboxamide. The protein operates within amino-acid biosynthesis; L-histidine biosynthesis; L-histidine from 5-phospho-alpha-D-ribose 1-diphosphate: step 3/9. Its function is as follows. Catalyzes the hydrolysis of the adenine ring of phosphoribosyl-AMP. This is Phosphoribosyl-AMP cyclohydrolase from Acidovorax ebreus (strain TPSY) (Diaphorobacter sp. (strain TPSY)).